The chain runs to 193 residues: Orotate phosphoribosyltransferase (193 aa).

Position 114-122 (114-122) interacts with 5-phospho-alpha-D-ribose 1-diphosphate; sequence EDVITTGGS. The orotate site is built by Thr118 and Arg146.

The protein belongs to the purine/pyrimidine phosphoribosyltransferase family. PyrE subfamily. As to quaternary structure, homodimer. It depends on Mg(2+) as a cofactor.

It carries out the reaction orotidine 5'-phosphate + diphosphate = orotate + 5-phospho-alpha-D-ribose 1-diphosphate. Its pathway is pyrimidine metabolism; UMP biosynthesis via de novo pathway; UMP from orotate: step 1/2. Its function is as follows. Catalyzes the transfer of a ribosyl phosphate group from 5-phosphoribose 1-diphosphate to orotate, leading to the formation of orotidine monophosphate (OMP). This is Orotate phosphoribosyltransferase from Chlorobium phaeobacteroides (strain DSM 266 / SMG 266 / 2430).